Reading from the N-terminus, the 1313-residue chain is Mitogen-activated protein kinase kinase kinase 15 (1313 aa).

The interval 1-58 is disordered; the sequence is MESGGGNAPAGALGAASESPQCPPPPGVEGAAGPAEPDGAAEGAAGGSGEGESGGGPR. Low complexity predominate over residues 28 to 43; that stretch reads VEGAAGPAEPDGAAEG. A compositionally biased stretch (gly residues) spans 44–57; the sequence is AAGGSGEGESGGGP. One can recognise a Protein kinase domain in the interval 652 to 908; it reads NGERVVLGKG…TAELLREGFL (257 aa). ATP contacts are provided by residues 658–666 and lysine 681; that span reads LGKGTYGIV. Aspartate 773 serves as the catalytic Proton acceptor. Positions 939–958 are disordered; sequence EPMATSSSEHGSVSPDSDAQ. Polar residues predominate over residues 942–955; that stretch reads ATSSSEHGSVSPDS. Serine 994 is modified (phosphoserine). Residues 1179-1225 adopt a coiled-coil conformation; that stretch reads QLGELRQETNRLLEHLVEKEREYQNLLRQTLEQKTQELYHLQLKLKS.

The protein belongs to the protein kinase superfamily. STE Ser/Thr protein kinase family. MAP kinase kinase kinase subfamily. Requires Mg(2+) as cofactor. Isoform 2 and isoform 3 are widely expressed. Isoform 2 highest levels are observed in fetal brain, and isoform 3 highest levels in pancreas, peripheral blood leukocytes, fetal brain and spleen.

The catalysed reaction is L-seryl-[protein] + ATP = O-phospho-L-seryl-[protein] + ADP + H(+). It catalyses the reaction L-threonyl-[protein] + ATP = O-phospho-L-threonyl-[protein] + ADP + H(+). Its activity is regulated as follows. Contains an N-terminal autoinhibitory domain. Activated by phosphorylation at Thr-812, inhibited by phosphorylation at Ser-924 and Ser-994. Its function is as follows. Serine/threonine kinase which acts as a component of the MAP kinase signal transduction pathway. Once activated, acts as an upstream activator of the p38 MAPK signal transduction cascade through the phosphorylation and activation of several MAP kinase kinases. May function in a signal transduction pathway that is activated by various cell stresses and leads to apoptosis. Involved in phosphorylation of WNK4 in response to osmotic stress or hypotonic low-chloride stimulation via the p38 MAPK signal transduction cascade. The sequence is that of Mitogen-activated protein kinase kinase kinase 15 (MAP3K15) from Homo sapiens (Human).